A 142-amino-acid polypeptide reads, in one-letter code: HTH-type transcriptional regulator MntR (142 aa).

In terms of domain architecture, HTH dtxR-type spans 1–63 (MPTPSMEDYI…YEKYRGLILT (63 aa)). 6 residues coordinate Mn(2+): Asp8, Glu11, His77, Glu99, Glu102, and His103.

This sequence belongs to the DtxR/MntR family. Homodimer.

The protein localises to the cytoplasm. Its activity is regulated as follows. DNA binding is strongly activated by Mn(2+). Functionally, central regulator of manganese homeostasis. This chain is HTH-type transcriptional regulator MntR, found in Listeria monocytogenes serotype 4b (strain CLIP80459).